A 587-amino-acid polypeptide reads, in one-letter code: NADH-quinone oxidoreductase subunit C/D (587 aa).

The tract at residues Met1 to Gln178 is NADH dehydrogenase I subunit C. The tract at residues Asp202 to Arg587 is NADH dehydrogenase I subunit D.

This sequence in the N-terminal section; belongs to the complex I 30 kDa subunit family. It in the C-terminal section; belongs to the complex I 49 kDa subunit family. As to quaternary structure, NDH-1 is composed of 13 different subunits. Subunits NuoB, CD, E, F, and G constitute the peripheral sector of the complex.

Its subcellular location is the cell inner membrane. The catalysed reaction is a quinone + NADH + 5 H(+)(in) = a quinol + NAD(+) + 4 H(+)(out). Functionally, NDH-1 shuttles electrons from NADH, via FMN and iron-sulfur (Fe-S) centers, to quinones in the respiratory chain. The immediate electron acceptor for the enzyme in this species is believed to be ubiquinone. Couples the redox reaction to proton translocation (for every two electrons transferred, four hydrogen ions are translocated across the cytoplasmic membrane), and thus conserves the redox energy in a proton gradient. This is NADH-quinone oxidoreductase subunit C/D from Methylococcus capsulatus (strain ATCC 33009 / NCIMB 11132 / Bath).